We begin with the raw amino-acid sequence, 502 residues long: Sporulation-specific protein 2 (502 aa).

Residues methionine 1–alanine 56 form the signal peptide. N-linked (GlcNAc...) asparagine glycosylation is found at asparagine 77, asparagine 135, asparagine 285, asparagine 303, asparagine 340, asparagine 343, and asparagine 355. The disordered stretch occupies residues glutamate 441–glutamate 474. Basic and acidic residues predominate over residues glutamine 448–lysine 461. The GPI-anchor amidated asparagine moiety is linked to residue asparagine 475. Positions serine 476 to phenylalanine 502 are cleaved as a propeptide — removed in mature form.

The protein belongs to the SPS2 family.

The protein localises to the cell membrane. Involved in middle stages of meiosis. Redundant with SPS22 for the organization of the beta-glucan layer of the spore wall. The polypeptide is Sporulation-specific protein 2 (SPS2) (Saccharomyces cerevisiae (strain ATCC 204508 / S288c) (Baker's yeast)).